The following is an 896-amino-acid chain: Echinoderm microtubule-associated protein-like 3 (896 aa).

Position 1 is an N-acetylmethionine (Met1). A coiled-coil region spans residues 16 to 43; it reads LQSLSQRLRVQEQEMELVKAALAEALRL. The interval 50–209 is disordered; that stretch reads PSSLQGSGTP…GGPGSRRSNY (160 aa). A compositionally biased stretch (polar residues) spans 77–88; that stretch reads TPSLVSRGTQTE. Over residues 134–145 the composition is skewed to pro residues; that stretch reads PGPPGILRPLQP. The span at 154–163 shows a compositional bias: low complexity; that stretch reads RNSSSSSSPS. Positions 174-189 are enriched in polar residues; the sequence is AISSANLLVRSGSTES. 3 positions are modified to phosphoserine: Ser176, Ser198, and Ser204. WD repeat units follow at residues 234-286, 295-344, 350-392, 398-434, 448-487, 504-543, 549-584, 589-626, 629-667, 674-709, 716-755, 765-823, and 830-869; these read RSLE…LYRP, GGGQ…IWDS, LQEI…VWDC, LAEI…FWNW, RKQG…TWGR, YGIV…QWGP, QEAE…LRGD, FSPV…LWDG, HALA…VLDT, SDVI…IYSV, SSRF…YWDV, RYES…LFQY, and APSR…QWRV. Residues 876–896 form a disordered region; it reads GPAPATPSRTPSLSPASSLDV. Residues 877–896 are compositionally biased toward low complexity; that stretch reads PAPATPSRTPSLSPASSLDV. Position 881 is a phosphothreonine; by CDK1 (Thr881). Ser883 carries the post-translational modification Phosphoserine.

The protein belongs to the WD repeat EMAP family. Homotrimer; self-association is mediated by the N-terminal coiled coil. Interacts with EML2 but not with EML1. Interacts (phosphorylated at Thr-881) with TUBG1, HAUS1, HAUS2, HAUS3, HAUS4, HAUS5, HAUS6, HAUS7 and HAUS8. In terms of processing, phosphorylation at Thr-881 during mitosis is required for interaction with TUBG1, HAUS1, HAUS2, HAUS3, HAUS4, HAUS5, HAUS6, HAUS7 and HAUS8 and their recruitment to spindle microtubules.

The protein resides in the cytoplasm. It localises to the cytoskeleton. It is found in the nucleus. The protein localises to the midbody. Its subcellular location is the spindle. Functionally, regulates mitotic spindle assembly, microtubule (MT)-kinetochore attachment and chromosome separation via recruitment of HAUS augmin-like complex and TUBG1 to the existing MTs and promoting MT-based MT nucleation. Required for proper alignnment of chromosomes during metaphase. This is Echinoderm microtubule-associated protein-like 3 (EML3) from Homo sapiens (Human).